The sequence spans 149 residues: Large ribosomal subunit protein bL9 (149 aa).

This sequence belongs to the bacterial ribosomal protein bL9 family.

Binds to the 23S rRNA. This is Large ribosomal subunit protein bL9 from Anaeromyxobacter dehalogenans (strain 2CP-C).